We begin with the raw amino-acid sequence, 142 residues long: Putative pre-16S rRNA nuclease (142 aa).

Belongs to the YqgF nuclease family.

The protein localises to the cytoplasm. Its function is as follows. Could be a nuclease involved in processing of the 5'-end of pre-16S rRNA. This is Putative pre-16S rRNA nuclease from Lactobacillus delbrueckii subsp. bulgaricus (strain ATCC 11842 / DSM 20081 / BCRC 10696 / JCM 1002 / NBRC 13953 / NCIMB 11778 / NCTC 12712 / WDCM 00102 / Lb 14).